We begin with the raw amino-acid sequence, 420 residues long: Dynein axonemal assembly factor 4 (420 aa).

The CS domain maps to 3-87; the sequence is LQVSDYSWQQ…KEAAMWETLS (85 aa). The segment at 7-103 is mediates interaction with ESR1 and STUB1; it reads DYSWQQTKTA…EMMQRIREKS (97 aa). TPR repeat units lie at residues 290 to 323, 324 to 357, and 366 to 399; these read PEWLKDKGNKLFATENYLAAINAYNLAIRLNNKM, PLLYLNRAACHLKLKNLHKAIEDSSKALELLMPP, and MKAHVRRGTAFCQLELYVEGLQDYEAALKIDPSN.

Interacts with ZMYND10. Interacts with STUB1. Interacts with ESR1 and ESR2. Interacts with DNAAF2. Interacts with CCT3, CCT4, CCT5 and CCT8. Interacts with DNAAF6/PIH1D3.

It localises to the nucleus. It is found in the cytoplasm. The protein localises to the cell projection. The protein resides in the neuron projection. Its subcellular location is the dynein axonemal particle. Involved in neuronal migration during development of the cerebral neocortex. May regulate the stability and proteasomal degradation of the estrogen receptors that play an important role in neuronal differentiation, survival and plasticity. Axonemal dynein assembly factor required for ciliary motility. In Pan paniscus (Pygmy chimpanzee), this protein is Dynein axonemal assembly factor 4.